The following is a 386-amino-acid chain: Eukaryotic translation initiation factor 3 subunit M (386 aa).

The PCI domain maps to asparagine 181–histidine 343.

The protein belongs to the eIF-3 subunit M family. As to quaternary structure, component of the eukaryotic translation initiation factor 3 (eIF-3) complex.

The protein localises to the cytoplasm. Its function is as follows. Component of the eukaryotic translation initiation factor 3 (eIF-3) complex, which is involved in protein synthesis of a specialized repertoire of mRNAs and, together with other initiation factors, stimulates binding of mRNA and methionyl-tRNAi to the 40S ribosome. The eIF-3 complex specifically targets and initiates translation of a subset of mRNAs involved in cell proliferation. The polypeptide is Eukaryotic translation initiation factor 3 subunit M (Aedes aegypti (Yellowfever mosquito)).